Reading from the N-terminus, the 360-residue chain is Phosphoserine aminotransferase (360 aa).

Arginine 43 lines the L-glutamate pocket. Residues 77–78 (AS), tryptophan 103, threonine 152, aspartate 172, and glutamine 195 each bind pyridoxal 5'-phosphate. Position 196 is an N6-(pyridoxal phosphate)lysine (lysine 196). 237 to 238 (NT) is a pyridoxal 5'-phosphate binding site.

The protein belongs to the class-V pyridoxal-phosphate-dependent aminotransferase family. SerC subfamily. In terms of assembly, homodimer. Pyridoxal 5'-phosphate is required as a cofactor.

The protein localises to the cytoplasm. The catalysed reaction is O-phospho-L-serine + 2-oxoglutarate = 3-phosphooxypyruvate + L-glutamate. It catalyses the reaction 4-(phosphooxy)-L-threonine + 2-oxoglutarate = (R)-3-hydroxy-2-oxo-4-phosphooxybutanoate + L-glutamate. The protein operates within amino-acid biosynthesis; L-serine biosynthesis; L-serine from 3-phospho-D-glycerate: step 2/3. It functions in the pathway cofactor biosynthesis; pyridoxine 5'-phosphate biosynthesis; pyridoxine 5'-phosphate from D-erythrose 4-phosphate: step 3/5. Functionally, catalyzes the reversible conversion of 3-phosphohydroxypyruvate to phosphoserine and of 3-hydroxy-2-oxo-4-phosphonooxybutanoate to phosphohydroxythreonine. The sequence is that of Phosphoserine aminotransferase from Syntrophobacter fumaroxidans (strain DSM 10017 / MPOB).